The primary structure comprises 123 residues: Cliotide T4 (123 aa).

An N-terminal signal peptide occupies residues 1–28 (MASLRIAPLALFFFLAASVMFTVEKTEA). Positions 29–58 (GIPCGESCVFIPCITAAIGCSCKSKVCYRN) form a cross-link, cyclopeptide (Gly-Asn). 3 cysteine pairs are disulfide-bonded: cysteine 32-cysteine 48, cysteine 36-cysteine 50, and cysteine 41-cysteine 55. The propeptide at 59-123 (HVIAAEAKTM…KDHLKMSITN (65 aa)) is removed in mature form.

Contains 3 disulfide bonds. Post-translationally, this is a cyclic peptide. As to expression, expressed in flower, stem, shoot, root, leaf, seed, pod and nodule (at protein level).

Functionally, probably participates in a plant defense mechanism. Active against Gram-negative bacteria E.coli ATCC 700926 (MIC=1.0 uM), K.pneumoniae ATTC 13883 (MIC=5.5 uM) and P.aeruginosa ATCC 39018 (MIC=7.5 uM). Has hemolytic and cytotoxic activity. The polypeptide is Cliotide T4 (Clitoria ternatea (Butterfly pea)).